We begin with the raw amino-acid sequence, 607 residues long: Terpenoid synthase 29 (607 aa).

Residues Asp-358, Asp-362, Asn-502, Thr-506, and Glu-510 each contribute to the Mg(2+) site. Residues 358–362 (DDTYD) carry the DDXXD motif motif.

This sequence belongs to the terpene synthase family. Tpsa subfamily. Mg(2+) serves as cofactor. Mn(2+) is required as a cofactor. Predominantly expressed in flowers but also in siliques, roots, leaves and stems.

The protein localises to the cytoplasm. It functions in the pathway secondary metabolite biosynthesis; terpenoid biosynthesis. The protein is Terpenoid synthase 29 (TPS29) of Arabidopsis thaliana (Mouse-ear cress).